Consider the following 134-residue polypeptide: Large ribosomal subunit protein uL16c (134 aa).

This sequence belongs to the universal ribosomal protein uL16 family. Part of the 50S ribosomal subunit.

The protein localises to the plastid. Its subcellular location is the chloroplast. In Pinus thunbergii (Japanese black pine), this protein is Large ribosomal subunit protein uL16c.